Reading from the N-terminus, the 101-residue chain is Small ribosomal subunit protein uS14 (101 aa).

Belongs to the universal ribosomal protein uS14 family. Part of the 30S ribosomal subunit. Contacts proteins S3 and S10.

Its function is as follows. Binds 16S rRNA, required for the assembly of 30S particles and may also be responsible for determining the conformation of the 16S rRNA at the A site. This chain is Small ribosomal subunit protein uS14, found in Shewanella sp. (strain ANA-3).